Consider the following 127-residue polypeptide: Glycine cleavage system H protein (127 aa).

The Lipoyl-binding domain maps to 22 to 104; sequence EAVIGITHFA…YTEGWMLRVK (83 aa). Residue K63 is modified to N6-lipoyllysine.

This sequence belongs to the GcvH family. The glycine cleavage system is composed of four proteins: P, T, L and H. The cofactor is (R)-lipoate.

Functionally, the glycine cleavage system catalyzes the degradation of glycine. The H protein shuttles the methylamine group of glycine from the P protein to the T protein. The polypeptide is Glycine cleavage system H protein (Nitratidesulfovibrio vulgaris (strain DP4) (Desulfovibrio vulgaris)).